We begin with the raw amino-acid sequence, 202 residues long: MRLWLVRHGETEANVAGLYSGHAPTPLTEKGIGQAKTLHTLLRHAPFDRVLCSELERARHTARLVLEGRDVPQHILPELNEMYFGDWEMRHHRDLTHEDAESYAAWCTDWQNAVPTNGEGFQAFTRRVERFISRLDAFSDCQNLLIVSHQGVLSLLIARLLTMPAASLWHFRVEQGCWSAIDICEGFATLKVLNSRAVWRPE.

His-8 acts as the Tele-phosphohistidine intermediate in catalysis. Glu-81 functions as the Proton donor/acceptor in the catalytic mechanism.

Belongs to the phosphoglycerate mutase family. As to quaternary structure, monomer.

The enzyme catalyses adenosylcob(III)alamin 5'-phosphate + H2O = adenosylcob(III)alamin + phosphate. It carries out the reaction alpha-ribazole 5'-phosphate + H2O = alpha-ribazole + phosphate. It functions in the pathway nucleoside biosynthesis; alpha-ribazole biosynthesis; alpha-ribazole from 5,6-dimethylbenzimidazole: step 2/2. Its function is as follows. Catalyzes the conversion of adenosylcobalamin 5'-phosphate to adenosylcobalamin (vitamin B12); involved in the assembly of the nucleotide loop of cobalamin. Also catalyzes the hydrolysis of the phospho group from alpha-ribazole 5'-phosphate to form alpha-ribazole. The protein is Adenosylcobalamin/alpha-ribazole phosphatase (cobC) of Salmonella typhimurium (strain LT2 / SGSC1412 / ATCC 700720).